A 581-amino-acid polypeptide reads, in one-letter code: Bestrophin-1 (581 aa).

Topologically, residues 1-31 are cytoplasmic; the sequence is MTVTYSSQVANARLGSFSRLLLCWRGSIYKL. Ala10 provides a ligand contact to Ca(2+). The chain crosses the membrane as a helical span at residues 32–51; it reads LYGEFLIFLLCYYIIRFIYR. Residues 52–60 are Extracellular-facing; sequence MALTDEQQV. The chain crosses the membrane as a helical span at residues 61-82; the sequence is IFEKLTLYCDSYIQLIPISFVL. The Cytoplasmic segment spans residues 83–237; the sequence is GFYVTLVVTR…DWISVPLVYT (155 aa). Residues 238 to 255 traverse the membrane as a helical segment; the sequence is QVVTVAVYSFFLACLVGR. Topologically, residues 256–274 are extracellular; sequence QFLNPAKAYPGHEMDLVVP. The chain crosses the membrane as a helical span at residues 275–288; it reads LFTFLQFFFYAGWL. Over 289-581 the chain is Cytoplasmic; sequence KVAEQLINPF…ALENRDEAHS (293 aa). Ca(2+) is bound by residues Gln293, Asn296, Asp301, and Asp304. The disordered stretch occupies residues 416–440; the sequence is EGHFHEGHPKNLRGARLDSSDQEDS.

Belongs to the anion channel-forming bestrophin (TC 1.A.46) family. Calcium-sensitive chloride channel subfamily. Interacts with YWHAG; this interaction promotes the ligand-gated L-glutamate channel activity leading to the positive regulation of NMDA glutamate receptor activity through the L-glutamate secretion. Phosphorylated (in vitro). In terms of processing, dephosphorylated (in vitro) by PP2A.

It is found in the cell membrane. It localises to the basolateral cell membrane. It catalyses the reaction chloride(in) = chloride(out). The enzyme catalyses hydrogencarbonate(in) = hydrogencarbonate(out). The catalysed reaction is 4-aminobutanoate(in) = 4-aminobutanoate(out). It carries out the reaction L-glutamate(out) = L-glutamate(in). Ligand-gated anion channel that allows the movement of anions across cell membranes when activated by calcium (Ca2+). Allows the movement of chloride and hydrogencarbonate. Found in a partially open conformation leading to significantly smaller chloride movement. Upon F2R/PAR-1 activation, the sequestered calcium is released into the cytosol of astrocytes, leading to the (Ca2+)-dependent release of L-glutamate into the synaptic cleft that targets the neuronal postsynaptic GRIN2A/NMDAR receptor resulting in the synaptic plasticity regulation. Upon activation of the norepinephrine-alpha-1 adrenergic receptor signaling pathway, transports as well D-serine than L-glutamate in a (Ca2+)-dependent manner, leading to activation of adjacent NMDAR receptors and therefore regulates the heterosynaptic long-term depression and metaplasticity during initial memory acquisition. Releases the 4-aminobutanoate neurotransmitter in a (Ca2+)-dependent manner, and participates in its tonic release from cerebellar glial cells. The chain is Bestrophin-1 from Sus scrofa (Pig).